A 337-amino-acid polypeptide reads, in one-letter code: Glycerol-3-phosphate dehydrogenase [NAD(P)+] (337 aa).

NADPH-binding residues include W11, R30, and K102. Sn-glycerol 3-phosphate-binding residues include K102, G138, and S140. A142 serves as a coordination point for NADPH. Residues K193, D246, S256, R257, and N258 each contribute to the sn-glycerol 3-phosphate site. The active-site Proton acceptor is the K193. R257 is a binding site for NADPH. Residues V281 and E283 each coordinate NADPH.

Belongs to the NAD-dependent glycerol-3-phosphate dehydrogenase family.

The protein localises to the cytoplasm. It carries out the reaction sn-glycerol 3-phosphate + NAD(+) = dihydroxyacetone phosphate + NADH + H(+). It catalyses the reaction sn-glycerol 3-phosphate + NADP(+) = dihydroxyacetone phosphate + NADPH + H(+). It functions in the pathway membrane lipid metabolism; glycerophospholipid metabolism. Its function is as follows. Catalyzes the reduction of the glycolytic intermediate dihydroxyacetone phosphate (DHAP) to sn-glycerol 3-phosphate (G3P), the key precursor for phospholipid synthesis. This is Glycerol-3-phosphate dehydrogenase [NAD(P)+] from Variovorax paradoxus (strain S110).